Here is a 538-residue protein sequence, read N- to C-terminus: Putative cysteine ligase BshC (538 aa).

A coiled-coil region spans residues I419–E445.

Belongs to the BshC family.

In terms of biological role, involved in bacillithiol (BSH) biosynthesis. May catalyze the last step of the pathway, the addition of cysteine to glucosamine malate (GlcN-Mal) to generate BSH. The protein is Putative cysteine ligase BshC of Lysinibacillus sphaericus (strain C3-41).